The sequence spans 639 residues: DNA gyrase subunit B (639 aa).

Residues 392–402 (QAEELTRRKSA) are compositionally biased toward basic and acidic residues. Residues 392–416 (QAEELTRRKSALESTSLPGKLADCQ) form a disordered region. In terms of domain architecture, Toprim spans 423–537 (SELFIVEGDS…AGYVYAAQPP (115 aa)). Residues glutamate 429, aspartate 502, and aspartate 504 each coordinate Mg(2+). Lysine 624 participates in a covalent cross-link: Glycyl lysine isopeptide (Lys-Gly) (interchain with G-Cter in SAMP2).

This sequence belongs to the type II topoisomerase GyrB family. Heterotetramer, composed of two GyrA and two GyrB chains. In the heterotetramer, GyrA contains the active site tyrosine that forms a transient covalent intermediate with DNA, while GyrB binds cofactors and catalyzes ATP hydrolysis. Mg(2+) serves as cofactor. The cofactor is Mn(2+). Requires Ca(2+) as cofactor.

Its subcellular location is the cytoplasm. It catalyses the reaction ATP-dependent breakage, passage and rejoining of double-stranded DNA.. Its function is as follows. A type II topoisomerase that negatively supercoils closed circular double-stranded (ds) DNA in an ATP-dependent manner to modulate DNA topology and maintain chromosomes in an underwound state. Negative supercoiling favors strand separation, and DNA replication, transcription, recombination and repair, all of which involve strand separation. Also able to catalyze the interconversion of other topological isomers of dsDNA rings, including catenanes and knotted rings. Type II topoisomerases break and join 2 DNA strands simultaneously in an ATP-dependent manner. This Haloferax volcanii (strain ATCC 29605 / DSM 3757 / JCM 8879 / NBRC 14742 / NCIMB 2012 / VKM B-1768 / DS2) (Halobacterium volcanii) protein is DNA gyrase subunit B.